An 833-amino-acid chain; its full sequence is DNA gyrase subunit A (833 aa).

Residues 34–500 (LPDVRDGLKP…AGDVRDIEDI (467 aa)) form the Topo IIA-type catalytic domain. The active-site O-(5'-phospho-DNA)-tyrosine intermediate is the Y122. The short motif at 527 to 533 (QKRGGQG) is the GyrA-box element.

It belongs to the type II topoisomerase GyrA/ParC subunit family. Heterotetramer, composed of two GyrA and two GyrB chains. In the heterotetramer, GyrA contains the active site tyrosine that forms a transient covalent intermediate with DNA, while GyrB binds cofactors and catalyzes ATP hydrolysis.

It localises to the cytoplasm. The catalysed reaction is ATP-dependent breakage, passage and rejoining of double-stranded DNA.. Functionally, a type II topoisomerase that negatively supercoils closed circular double-stranded (ds) DNA in an ATP-dependent manner to modulate DNA topology and maintain chromosomes in an underwound state. Negative supercoiling favors strand separation, and DNA replication, transcription, recombination and repair, all of which involve strand separation. Also able to catalyze the interconversion of other topological isomers of dsDNA rings, including catenanes and knotted rings. Type II topoisomerases break and join 2 DNA strands simultaneously in an ATP-dependent manner. This Chlamydia muridarum (strain MoPn / Nigg) protein is DNA gyrase subunit A.